We begin with the raw amino-acid sequence, 504 residues long: MEKFQGYLEFDGARQQSFLYPLFFREYIYVLAYDHGLNRLNRNRSIFLENTDYDKKYSSLIVKRLILRMYEQNRLIIPTKDLNQNSFLGHTSLFYYQMISVLFAVIVEIPFSLRLGSSFQGKQLKKSYNLQSIHSIFPFLEDKLAHFNYVLDVLIPYPIHLEILVQILRYWVKDASSLHFFRFCLYEYCNCKNFYIKKKSILNPRFFLFLYNSHVCEYESIFFFLRKRSSHLRSPSYEVLFERIFFYGKIQHFFKVFINNFPAILGLLKDPFIHYVRYHGRCILATKDTPLLMNKWKYFFVNLWQCYFSVWFQSQKVNINQLSKDNLEFLGYLSSLRLNPLVVRSQMLENSFLIDNVRIKLDSKIPISSIIGSLAKDKFCNVLGHPISKATWTDSSDSDILNRFVRICRNISHYYSGSSKKKNLYRIKYILRLCCVKTLARKHKSTVRAFLKRLGSGLLEEFLTGEDQVLSLIFPRSYYASKRLYRVRIWYLDILYLNDLVNNE.

Belongs to the intron maturase 2 family. MatK subfamily.

The protein localises to the plastid. The protein resides in the chloroplast. In terms of biological role, usually encoded in the trnK tRNA gene intron. Probably assists in splicing its own and other chloroplast group II introns. This Arabidopsis halleri protein is Maturase K.